The following is a 390-amino-acid chain: UPF0229 protein Cbei_0567 (390 aa).

The tract at residues 77 to 108 (SGVGNEKRGEKLGNGNKKLAKGNQGAGNEEGD) is disordered. Residues 89–103 (GNGNKKLAKGNQGAG) show a composition bias toward low complexity.

The protein belongs to the UPF0229 family.

The protein is UPF0229 protein Cbei_0567 of Clostridium beijerinckii (strain ATCC 51743 / NCIMB 8052) (Clostridium acetobutylicum).